The primary structure comprises 225 residues: Octanoyltransferase (225 aa).

Residues 31 to 214 form the BPL/LPL catalytic domain; sequence ENTCDEVWLV…ELTTLLDYTD (184 aa). Substrate-binding positions include 70-77, 137-139, and 150-152; these read RGGQVTYH, SLG, and GLA. Residue C168 is the Acyl-thioester intermediate of the active site.

It belongs to the LipB family.

The protein localises to the cytoplasm. It catalyses the reaction octanoyl-[ACP] + L-lysyl-[protein] = N(6)-octanoyl-L-lysyl-[protein] + holo-[ACP] + H(+). It participates in protein modification; protein lipoylation via endogenous pathway; protein N(6)-(lipoyl)lysine from octanoyl-[acyl-carrier-protein]: step 1/2. Functionally, catalyzes the transfer of endogenously produced octanoic acid from octanoyl-acyl-carrier-protein onto the lipoyl domains of lipoate-dependent enzymes. Lipoyl-ACP can also act as a substrate although octanoyl-ACP is likely to be the physiological substrate. The chain is Octanoyltransferase from Aliivibrio fischeri (strain ATCC 700601 / ES114) (Vibrio fischeri).